A 184-amino-acid polypeptide reads, in one-letter code: Pyridoxal 5'-phosphate synthase subunit PdxT (184 aa).

46-48 (GES) provides a ligand contact to L-glutamine. The active-site Nucleophile is cysteine 75. L-glutamine is bound by residues arginine 101 and 129-130 (IR). Active-site charge relay system residues include histidine 165 and glutamate 167.

Belongs to the glutaminase PdxT/SNO family. In terms of assembly, in the presence of PdxS, forms a dodecamer of heterodimers. Only shows activity in the heterodimer.

It carries out the reaction aldehydo-D-ribose 5-phosphate + D-glyceraldehyde 3-phosphate + L-glutamine = pyridoxal 5'-phosphate + L-glutamate + phosphate + 3 H2O + H(+). It catalyses the reaction L-glutamine + H2O = L-glutamate + NH4(+). It functions in the pathway cofactor biosynthesis; pyridoxal 5'-phosphate biosynthesis. Its function is as follows. Catalyzes the hydrolysis of glutamine to glutamate and ammonia as part of the biosynthesis of pyridoxal 5'-phosphate. The resulting ammonia molecule is channeled to the active site of PdxS. This Staphylococcus haemolyticus (strain JCSC1435) protein is Pyridoxal 5'-phosphate synthase subunit PdxT.